The chain runs to 394 residues: Elongation factor Tu (394 aa).

A tr-type G domain is found at 10–204 (KPHVNVGTIG…ALDSYIPEPQ (195 aa)). Residues 19–26 (GHVDHGKT) are G1. 19–26 (GHVDHGKT) lines the GTP pocket. Residue T26 participates in Mg(2+) binding. The interval 60–64 (GITIN) is G2. The tract at residues 81–84 (DCPG) is G3. GTP is bound by residues 81-85 (DCPGH) and 136-139 (NKCD). Residues 136 to 139 (NKCD) are G4. Residues 174 to 176 (SAL) form a G5 region.

This sequence belongs to the TRAFAC class translation factor GTPase superfamily. Classic translation factor GTPase family. EF-Tu/EF-1A subfamily. Monomer.

The protein resides in the cytoplasm. It carries out the reaction GTP + H2O = GDP + phosphate + H(+). Functionally, GTP hydrolase that promotes the GTP-dependent binding of aminoacyl-tRNA to the A-site of ribosomes during protein biosynthesis. This Shewanella baltica (strain OS185) protein is Elongation factor Tu.